Consider the following 573-residue polypeptide: Glutamate--tRNA ligase (573 aa).

A 'HIGH' region motif is present at residues 106-116 (PNPDGAFHLGN).

This sequence belongs to the class-I aminoacyl-tRNA synthetase family. Glutamate--tRNA ligase type 2 subfamily.

It localises to the cytoplasm. It carries out the reaction tRNA(Glu) + L-glutamate + ATP = L-glutamyl-tRNA(Glu) + AMP + diphosphate. In terms of biological role, catalyzes the attachment of glutamate to tRNA(Glu) in a two-step reaction: glutamate is first activated by ATP to form Glu-AMP and then transferred to the acceptor end of tRNA(Glu). The chain is Glutamate--tRNA ligase from Thermococcus onnurineus (strain NA1).